Here is a 755-residue protein sequence, read N- to C-terminus: Histone-lysine N-methyltransferase, H3 lysine-9 specific SUVH8 (755 aa).

Disordered regions lie at residues 62 to 98 (YDRD…PPQT) and 111 to 243 (YDRD…KMVI). 2 stretches are compositionally biased toward basic and acidic residues: residues 73 to 86 (VHRE…EEAH) and 122 to 135 (IDRE…EDAH). The segment at residues 174-186 (KRGRGRPKGSKNG) is a DNA-binding region (a.T hook). The segment covering 174–193 (KRGRGRPKGSKNGSRKPKKP) has biased composition (basic residues). Positions 197–207 (DNNSTDASAGP) are enriched in polar residues. The segment covering 212–231 (GKRRCGRPKGLKNRSRKPKK) has biased composition (basic residues). The region spanning 310 to 448 (GPIPGVQVGD…FKEYRFKLLR (139 aa)) is the YDG domain. Positions 528–578 (QSLVQSYIHQNCTCILKNCGQLPYHDNILVCRKPLIYECGGSCPTRMVETG) constitute a Pre-SET domain. Residues 581–723 (LHLEVFKTSN…PMTELTYDYG (143 aa)) enclose the SET domain. S-adenosyl-L-methionine-binding positions include 591–593 (CGW), Asp-624, Tyr-626, Arg-676, and 679–680 (NH). Zn(2+)-binding residues include Cys-682, Cys-743, Cys-745, and Cys-750. The 17-residue stretch at 739–755 (GKKICLCGSVKCRGSFG) folds into the Post-SET domain.

It belongs to the class V-like SAM-binding methyltransferase superfamily. Histone-lysine methyltransferase family. Suvar3-9 subfamily.

It localises to the nucleus. The protein localises to the chromosome. The protein resides in the centromere. It catalyses the reaction N(6)-methyl-L-lysyl(9)-[histone H3] + S-adenosyl-L-methionine = N(6),N(6)-dimethyl-L-lysyl(9)-[histone H3] + S-adenosyl-L-homocysteine + H(+). The catalysed reaction is L-lysyl(9)-[histone H3] + S-adenosyl-L-methionine = N(6)-methyl-L-lysyl(9)-[histone H3] + S-adenosyl-L-homocysteine + H(+). In terms of biological role, histone methyltransferase. Methylates 'Lys-9' of histone H3. H3 'Lys-9' methylation represents a specific tag for epigenetic transcriptional repression. In Arabidopsis thaliana (Mouse-ear cress), this protein is Histone-lysine N-methyltransferase, H3 lysine-9 specific SUVH8 (SUVH8).